We begin with the raw amino-acid sequence, 249 residues long: DNA polymerase sliding clamp (249 aa).

Belongs to the PCNA family. Homotrimer. The subunits circularize to form a toroid; DNA passes through its center. Replication factor C (RFC) is required to load the toroid on the DNA.

Functionally, sliding clamp subunit that acts as a moving platform for DNA processing. Responsible for tethering the catalytic subunit of DNA polymerase and other proteins to DNA during high-speed replication. This is DNA polymerase sliding clamp from Thermococcus onnurineus (strain NA1).